Here is a 105-residue protein sequence, read N- to C-terminus: Plastocyanin (105 aa).

One can recognise a Plastocyanin-like domain in the interval 1–105 (ETYTVKLGSD…GMVGKITVAG (105 aa)). 4 residues coordinate Cu(2+): His39, Cys89, His92, and Met97.

Belongs to the plastocyanin family. It depends on Cu(2+) as a cofactor.

The protein resides in the cellular thylakoid membrane. Its function is as follows. Participates in electron transfer between P700 and the cytochrome b6-f complex in photosystem I. This Anabaena variabilis protein is Plastocyanin (petE).